Here is an 84-residue protein sequence, read N- to C-terminus: Small ribosomal subunit protein uS17 (84 aa).

The protein belongs to the universal ribosomal protein uS17 family. In terms of assembly, part of the 30S ribosomal subunit.

Functionally, one of the primary rRNA binding proteins, it binds specifically to the 5'-end of 16S ribosomal RNA. In Clostridium botulinum (strain Eklund 17B / Type B), this protein is Small ribosomal subunit protein uS17.